A 247-amino-acid chain; its full sequence is Oil body-associated protein 2A (247 aa).

The segment at methionine 1–lysine 26 is disordered.

Belongs to the OBAP family.

This is Oil body-associated protein 2A from Arabidopsis thaliana (Mouse-ear cress).